We begin with the raw amino-acid sequence, 443 residues long: Tol-Pal system protein TolB (443 aa).

The signal sequence occupies residues Met1–Ala33.

Belongs to the TolB family. In terms of assembly, the Tol-Pal system is composed of five core proteins: the inner membrane proteins TolA, TolQ and TolR, the periplasmic protein TolB and the outer membrane protein Pal. They form a network linking the inner and outer membranes and the peptidoglycan layer.

It is found in the periplasm. Its function is as follows. Part of the Tol-Pal system, which plays a role in outer membrane invagination during cell division and is important for maintaining outer membrane integrity. This chain is Tol-Pal system protein TolB, found in Brucella melitensis biotype 1 (strain ATCC 23456 / CCUG 17765 / NCTC 10094 / 16M).